The chain runs to 127 residues: MARIAGVNIPQNKLVHIGLTYIYGIGNKFSSQICTSLEIPKAKRINELTDEDILKIREYIDANFKVEGDLRRDYSLTIKRLIDLACYRGSRHRKKLPVRGQRTRCNARTRKGKAIAIAGKKLTPLKK.

Belongs to the universal ribosomal protein uS13 family. As to quaternary structure, part of the 30S ribosomal subunit. Forms a loose heterodimer with protein S19. Forms two bridges to the 50S subunit in the 70S ribosome.

Functionally, located at the top of the head of the 30S subunit, it contacts several helices of the 16S rRNA. In the 70S ribosome it contacts the 23S rRNA (bridge B1a) and protein L5 of the 50S subunit (bridge B1b), connecting the 2 subunits; these bridges are implicated in subunit movement. Contacts the tRNAs in the A and P-sites. In Pelagibacter ubique (strain HTCC1062), this protein is Small ribosomal subunit protein uS13.